A 480-amino-acid polypeptide reads, in one-letter code: Glutamate--tRNA ligase (480 aa).

Positions 9–19 (PSPTGNLHIGT) match the 'HIGH' region motif. Positions 250 to 254 (KLSKR) match the 'KMSKS' region motif. Lysine 253 is a binding site for ATP.

This sequence belongs to the class-I aminoacyl-tRNA synthetase family. Glutamate--tRNA ligase type 1 subfamily. Monomer.

The protein localises to the cytoplasm. It catalyses the reaction tRNA(Glu) + L-glutamate + ATP = L-glutamyl-tRNA(Glu) + AMP + diphosphate. Functionally, catalyzes the attachment of glutamate to tRNA(Glu) in a two-step reaction: glutamate is first activated by ATP to form Glu-AMP and then transferred to the acceptor end of tRNA(Glu). The chain is Glutamate--tRNA ligase from Microcystis aeruginosa (strain NIES-843 / IAM M-2473).